A 347-amino-acid polypeptide reads, in one-letter code: GMP reductase (347 aa).

Residue 108 to 131 (ADFEKTVQILALNPALNFVCIDVA) coordinates NADP(+). Residues Gly-181 and Gly-183 each coordinate K(+). Cys-186 serves as the catalytic Thioimidate intermediate. 216–239 (IVSDGGCTMPGDVAKAFGGGADFV) is an NADP(+) binding site.

This sequence belongs to the IMPDH/GMPR family. GuaC type 1 subfamily. As to quaternary structure, homotetramer.

The enzyme catalyses IMP + NH4(+) + NADP(+) = GMP + NADPH + 2 H(+). In terms of biological role, catalyzes the irreversible NADPH-dependent deamination of GMP to IMP. It functions in the conversion of nucleobase, nucleoside and nucleotide derivatives of G to A nucleotides, and in maintaining the intracellular balance of A and G nucleotides. The polypeptide is GMP reductase (Salmonella paratyphi A (strain ATCC 9150 / SARB42)).